The primary structure comprises 715 residues: Transcription activator of gluconeogenesis MGYG_02011 (715 aa).

The segment covering 1-14 has biased composition (polar residues); it reads MSPHQTTGQESDNM. Residues 1 to 28 are disordered; it reads MSPHQTTGQESDNMAVNGENAPASSQYI. Residues 66–94 constitute a DNA-binding region (zn(2)-C6 fungal-type); sequence CYACQRGHLTCGDERPCQRCIKRGFQDAC. Composition is skewed to polar residues over residues 129-166, 179-191, 203-223, and 362-385; these read QNNV…PQNK, YASQ…TYQI, SLPQ…GQFN, and MMTT…RPNA. 4 disordered regions span residues 129–223, 354–414, 534–569, and 628–663; these read QNNV…GQFN, SPAS…RRRH, NHNV…NSST, and GSNG…NGRG. A compositionally biased stretch (low complexity) spans 386 to 400; that stretch reads SVSQQRQQPVVSTPQ. Composition is skewed to polar residues over residues 535–554 and 639–649; these read HNVN…SRGS and GEASSSEANEL. Positions 650–662 are enriched in low complexity; that stretch reads NGSNANGATTNGR.

This sequence belongs to the ERT1/acuK family.

Its subcellular location is the nucleus. In terms of biological role, transcription factor which regulates nonfermentable carbon utilization. Activator of gluconeogenetic genes. This Arthroderma gypseum (strain ATCC MYA-4604 / CBS 118893) (Microsporum gypseum) protein is Transcription activator of gluconeogenesis MGYG_02011.